We begin with the raw amino-acid sequence, 645 residues long: ATP-dependent zinc metalloprotease FtsH 3 (645 aa).

Topologically, residues 1–11 are cytoplasmic; the sequence is MQNKRNQSRVL. Residues 12-32 traverse the membrane as a helical segment; that stretch reads WLLLIYITIGIFIYVGVNSLI. The Periplasmic segment spans residues 33 to 110; sequence GTPDVSKIEY…YVRSLENSWW (78 aa). A helical membrane pass occupies residues 111–131; that stretch reads ISILTFLLPVFLLIFLFTFLF. Over 132 to 645 the chain is Cytoplasmic; the sequence is RSSGGGANQG…ENNLIERKGI (514 aa). Residue 202–209 participates in ATP binding; that stretch reads GEPGTGKT. His424 provides a ligand contact to Zn(2+). The active site involves Glu425. Residues His428 and Asp501 each contribute to the Zn(2+) site.

The protein in the central section; belongs to the AAA ATPase family. It in the C-terminal section; belongs to the peptidase M41 family. Homohexamer. Zn(2+) is required as a cofactor.

It localises to the cell inner membrane. Acts as a processive, ATP-dependent zinc metallopeptidase for both cytoplasmic and membrane proteins. Plays a role in the quality control of integral membrane proteins. This chain is ATP-dependent zinc metalloprotease FtsH 3, found in Petrotoga mobilis (strain DSM 10674 / SJ95).